Here is a 108-residue protein sequence, read N- to C-terminus: MSDITKQPANNISSDDKKEVAKASAKSSVEGAKRKTFYKSRSRKLCHFCAKGILKVDYKDVNTLRKNLNSYAKIVSRRQSGNCNLHQRHVSNAIKKARIMALLPFVKD.

The span at 1 to 12 (MSDITKQPANNI) shows a compositional bias: polar residues. The segment at 1–33 (MSDITKQPANNISSDDKKEVAKASAKSSVEGAK) is disordered.

The protein belongs to the bacterial ribosomal protein bS18 family. As to quaternary structure, part of the 30S ribosomal subunit. Forms a tight heterodimer with protein bS6.

Its function is as follows. Binds as a heterodimer with protein bS6 to the central domain of the 16S rRNA, where it helps stabilize the platform of the 30S subunit. This Mycoplasmoides gallisepticum (strain R(low / passage 15 / clone 2)) (Mycoplasma gallisepticum) protein is Small ribosomal subunit protein bS18.